Consider the following 508-residue polypeptide: MLGVRRALLLPPLQLALLVAAGTGARVSAPRSLAWGPGLHADAVLPVRYFFLQSVDSDGRNFTSSPPGQTQFKVVVKSLSPKELVRIYVPKPLDRNDGTFLVRYRMHETVHEGLKIEILYGGEHVAQSPYILKGPVYHEYCDCPEDDPQAWQKTLSCPANEPQIEQDFISFPSINLQQMLKEVPKRFGDERGAIVHYTILNNHIYRRSLGKYTDFKMFSDEILLSLARKVTLPDLEFYINLGDWPLEHRKVNDTPGPIPIISWCGSLDSRDIILPTYDVTHSTLEAMRGVTNDLLSVQGNTGPSWINKTEKAFFRGRDSREERLQLVLLSKENPQLLDAGITGYFFFQEKEKELGKAKLMGFFDFFKYKYQVNVDGTVAAYRYPYLMLGDSLVLKQESPYYEHFYVELRPWKHYVPIKRNLSDLLEKVKWAKENDEEAKRIAKEGQLTARDLLQPPRLYCYYYRVLQKYAERQVSKPMIRDGMERVPQPDDSTSVRQCHRKRPEREEL.

A signal peptide spans 1–24 (MLGVRRALLLPPLQLALLVAAGTG). The Filamin repeat unit spans residues 25–134 (ARVSAPRSLA…VAQSPYILKG (110 aa)). The N-linked (GlcNAc...) asparagine glycan is linked to asparagine 307. The tract at residues 480–508 (RDGMERVPQPDDSTSVRQCHRKRPEREEL) is disordered. The short motif at 505-508 (REEL) is the Prevents secretion from ER element.

Belongs to the KDELC family.

The protein resides in the endoplasmic reticulum lumen. It catalyses the reaction L-seryl-[EGF-like domain protein] + UDP-alpha-D-glucose = 3-O-(beta-D-glucosyl)-L-seryl-[EGF-like domain protein] + UDP + H(+). It carries out the reaction L-seryl-[EGF-like domain protein] + UDP-alpha-D-xylose = 3-O-(beta-D-xylosyl)-L-seryl-[EGF-like domain protein] + UDP + H(+). The protein operates within protein modification; protein glycosylation. Protein glucosyltransferase that catalyzes the transfer of glucose from UDP-glucose to a serine residue within the consensus sequence peptide C-X-N-T-X-G-S-F-X-C. Can also catalyze the transfer of xylose from UDP-xylose but less efficiently. Specifically targets extracellular EGF repeats of proteins such as NOTCH1, NOTCH3, FBN1, FBN2 and LTBP1. May regulate the transport of NOTCH1 and NOTCH3 to the plasma membrane and thereby the Notch signaling pathway. The chain is Protein O-glucosyltransferase 3 (Poglut3) from Rattus norvegicus (Rat).